We begin with the raw amino-acid sequence, 102 residues long: Large ribosomal subunit protein bL21 (102 aa).

This sequence belongs to the bacterial ribosomal protein bL21 family. Part of the 50S ribosomal subunit. Contacts protein L20.

This protein binds to 23S rRNA in the presence of protein L20. This is Large ribosomal subunit protein bL21 from Exiguobacterium sibiricum (strain DSM 17290 / CCUG 55495 / CIP 109462 / JCM 13490 / 255-15).